The primary structure comprises 87 residues: Conotoxin Bt15a (87 aa).

The N-terminal stretch at 1–23 (MEKLTILVLVATVLLAIQVLVQS) is a signal peptide. A propeptide spanning residues 24–49 (DGEKPLKRRVKQYAAKRLSALMRGPR) is cleaved from the precursor. Q50 is modified (pyrrolidone carboxylic acid).

It belongs to the conotoxin O2 superfamily. In terms of processing, contains 4 disulfide bonds. As to expression, expressed by the venom duct.

The protein localises to the secreted. This chain is Conotoxin Bt15a, found in Conus betulinus (Beech cone).